Reading from the N-terminus, the 158-residue chain is Phosphopantetheine adenylyltransferase (158 aa).

Residue T9 participates in substrate binding. ATP contacts are provided by residues 9–10 and H17; that span reads TF. Residues K41, L73, and R87 each contribute to the substrate site. Residues 88 to 90, E98, and 123 to 129 each bind ATP; these read GVR and WSYVSST.

This sequence belongs to the bacterial CoaD family. Homohexamer. It depends on Mg(2+) as a cofactor.

The protein localises to the cytoplasm. It catalyses the reaction (R)-4'-phosphopantetheine + ATP + H(+) = 3'-dephospho-CoA + diphosphate. It participates in cofactor biosynthesis; coenzyme A biosynthesis; CoA from (R)-pantothenate: step 4/5. Functionally, reversibly transfers an adenylyl group from ATP to 4'-phosphopantetheine, yielding dephospho-CoA (dPCoA) and pyrophosphate. This Histophilus somni (strain 2336) (Haemophilus somnus) protein is Phosphopantetheine adenylyltransferase.